A 344-amino-acid polypeptide reads, in one-letter code: Arginase 2, chloroplastic/mitochondrial (344 aa).

The transit peptide at 1 to 26 directs the protein to the chloroplast and mitochondrion; sequence MWKIGQRGVPYFQRLIAAPFTTLRSL. Mn(2+) contacts are provided by H163, D187, H189, and D191. Substrate is bound by residues 189-193, 197-199, and N228; these read HPDIY and EGN. Mn(2+) is bound by residues D272 and D274. Position 315 (E315) interacts with substrate.

It belongs to the arginase family. It depends on Mn(2+) as a cofactor. As to expression, expressed in vasculature of roots, root tips, leaves and cotyledons.

It is found in the mitochondrion. Its subcellular location is the plastid. The protein resides in the chloroplast. The enzyme catalyses L-arginine + H2O = urea + L-ornithine. It catalyses the reaction agmatine + H2O = urea + putrescine. The protein operates within nitrogen metabolism; urea cycle; L-ornithine and urea from L-arginine: step 1/1. Its pathway is amine and polyamine biosynthesis; putrescine biosynthesis via agmatine pathway; putrescine from agmatine: step 1/1. Catalyzes the hydrolysis of L-arginine to urea and L-ornithine. The latter can be utilized in the urea cycle or as a precursor for the synthesis of both polyamines and proline. Possesses agmatinase activity. Catalyzes the formation of putrescine from agmatine. This chain is Arginase 2, chloroplastic/mitochondrial (ARGAH2), found in Arabidopsis thaliana (Mouse-ear cress).